Reading from the N-terminus, the 726-residue chain is Cyclic nucleotide-gated ion channel 2 (726 aa).

Residues 1–127 (MPSHPNFIFR…SKRVQRWNRA (127 aa)) lie on the Cytoplasmic side of the membrane. Positions 26 to 46 (IDENSNLQINGGDSSSSGSDE) are disordered. A compositionally biased stretch (low complexity) spans 36 to 45 (GGDSSSSGSD). A helical transmembrane segment spans residues 128–148 (LLLARGMALAVDPLFFYALSI). The Extracellular segment spans residues 149–162 (GRTTGPACLYMDGA). The chain crosses the membrane as a helical span at residues 163 to 183 (FAAVVTVLRTCLDAVHLWHVW). At 184 to 219 (LQFRLAYVSRESLVVGCGKLVWDPRAIASHYARSLT) the chain is on the cytoplasmic side. The helical transmembrane segment at 220–240 (GFWFDVIVILPVPQAVFWLVV) threads the bilayer. The Extracellular portion of the chain corresponds to 241 to 254 (PKLIREEKVKLIMT). The chain crosses the membrane as a helical span at residues 255–275 (ILLLIFLFQFLPKIYHCICLM). The Cytoplasmic portion of the chain corresponds to 276 to 282 (RRMQKVT). Residues 283–303 (GYIFGTIWWGFALNLIAYFIA) form a helical membrane-spanning segment. Over 304–424 (SHVAGGCWYV…ANDLEPTSNW (121 aa)) the chain is Extracellular. The helical transmembrane segment at 425–445 (LEVIFSIVMVLSGLLLFTLLI) threads the bilayer. The Cytoplasmic segment spans residues 446–726 (GNIQVFLHAV…MSIRPHDHLE (281 aa)). A nucleoside 3',5'-cyclic phosphate is bound by residues 531 to 661 (LFRG…ARYY) and Asp600. Positions 645–661 (FRYKFANERLKRTARYY) are calmodulin-binding. One can recognise an IQ domain in the interval 666-695 (RTWAAVNIQMAWRRRRKRTRGENIGGSMSP).

It belongs to the cyclic nucleotide-gated cation channel (TC 1.A.1.5) family. In terms of assembly, homotetramer or heterotetramer (Potential). Binds calmodulin-1/4 with a higher affinity than calmodulin-2/3/5. Expressed in the whole plant but only weakly in roots. Strongly expressed in the expanded cotyledons of 14-day-old seedlings and detected later in leaves after the transition to flowering. Also detected in flowers during organ senescence and in the dehiscence zone of siliques.

It localises to the cell membrane. Functionally, acts as a cyclic nucleotide-gated ion channel. Permeable to potassium and calcium in a cyclic nucleotide-dependent fashion (cAMP or cGMP). Could also transport lithium, cesium and rubium and displays a strong selectivity against sodium. Seems to directly participate in pathogen-induced calcium influx. May function in homeostasis, re-establishing ionic balance after defense action and/or other stimuli. Could mediate the initiation of the developmentally regulated cell death programs. This Arabidopsis thaliana (Mouse-ear cress) protein is Cyclic nucleotide-gated ion channel 2 (CNGC2).